A 1147-amino-acid polypeptide reads, in one-letter code: Disease resistance protein RPP4 (1147 aa).

In terms of domain architecture, TIR spans R11–L175. The active site involves E86. Residues E189–N446 form the NB-ARC domain. LRR repeat units follow at residues M548–K573, P584–A606, Y608–L629, G630–I653, L655–A676, M698–P721, R722–A743, E744–L766, G767–I790, L792–A813, T814–L836, E837–C860, L926–T950, L952–L973, H974–L996, S997–S1017, T1018–R1042, and S1044–L1064.

As to quaternary structure, interacts with RSH1.

The enzyme catalyses NAD(+) + H2O = ADP-D-ribose + nicotinamide + H(+). TIR-NB-LRR receptor-like protein that confers resistance to the pathogen Hyaloperonospora arabidopsis isolates Emoy2 and Emwa1 (downy mildew disease). Plays a role in the regulation of temperature response during plant growth and survival. The chain is Disease resistance protein RPP4 from Arabidopsis thaliana (Mouse-ear cress).